A 197-amino-acid chain; its full sequence is uncharacterized protein (197 aa).

This is an uncharacterized protein from Orgyia pseudotsugata multicapsid polyhedrosis virus (OpMNPV).